The following is a 198-amino-acid chain: Photosystem I assembly protein Ycf4 (198 aa).

The interval 1–20 (MTASTTINKGDSPNGDSSAS) is disordered. Helical transmembrane passes span 36-58 (YWWA…SSYL) and 78-100 (LVMG…VILW).

This sequence belongs to the Ycf4 family.

It is found in the cellular thylakoid membrane. In terms of biological role, seems to be required for the assembly of the photosystem I complex. The sequence is that of Photosystem I assembly protein Ycf4 from Nostoc sp. (strain PCC 7120 / SAG 25.82 / UTEX 2576).